The following is a 159-amino-acid chain: Transcriptional repressor NrdR (159 aa).

A zinc finger spans residues 3–34 (CPFCGAEDTSVVDSRISEEGARIRRRRRCVEC). An ATP-cone domain is found at 49 to 139 (PQVIKQDGNR…VYRSFEDVGD (91 aa)).

The protein belongs to the NrdR family. Zn(2+) serves as cofactor.

Its function is as follows. Negatively regulates transcription of bacterial ribonucleotide reductase nrd genes and operons by binding to NrdR-boxes. The protein is Transcriptional repressor NrdR of Nitrosomonas europaea (strain ATCC 19718 / CIP 103999 / KCTC 2705 / NBRC 14298).